Here is a 212-residue protein sequence, read N- to C-terminus: Thymidylate kinase (212 aa).

10-17 (GLEGAGKT) is an ATP binding site.

It belongs to the thymidylate kinase family.

The catalysed reaction is dTMP + ATP = dTDP + ADP. In terms of biological role, phosphorylation of dTMP to form dTDP in both de novo and salvage pathways of dTTP synthesis. The sequence is that of Thymidylate kinase from Yersinia enterocolitica serotype O:8 / biotype 1B (strain NCTC 13174 / 8081).